The following is a 188-amino-acid chain: Multiple organellar RNA editing factor 7, mitochondrial (188 aa).

The N-terminal 20 residues, 1–20, are a transit peptide targeting the mitochondrion; the sequence is MARIIRRPLNLTAAVRFRLS. Residues 169 to 188 form a disordered region; sequence DAKSGVVKKKHRRKRKKKLI. Over residues 174–188 the composition is skewed to basic residues; it reads VVKKKHRRKRKKKLI.

It belongs to the MORF family. As to quaternary structure, heterodimers with MORF8/RIP1, MORF5/RIP5 and MORF6/RIP6.

Its subcellular location is the mitochondrion. Functionally, involved in organellar RNA editing. Required for the processing of few RNA editing sites in mitochondria. In Arabidopsis thaliana (Mouse-ear cress), this protein is Multiple organellar RNA editing factor 7, mitochondrial.